We begin with the raw amino-acid sequence, 212 residues long: 3-isopropylmalate dehydratase small subunit (212 aa).

It belongs to the LeuD family. LeuD type 1 subfamily. As to quaternary structure, heterodimer of LeuC and LeuD.

The enzyme catalyses (2R,3S)-3-isopropylmalate = (2S)-2-isopropylmalate. The protein operates within amino-acid biosynthesis; L-leucine biosynthesis; L-leucine from 3-methyl-2-oxobutanoate: step 2/4. In terms of biological role, catalyzes the isomerization between 2-isopropylmalate and 3-isopropylmalate, via the formation of 2-isopropylmaleate. In Beutenbergia cavernae (strain ATCC BAA-8 / DSM 12333 / CCUG 43141 / JCM 11478 / NBRC 16432 / NCIMB 13614 / HKI 0122), this protein is 3-isopropylmalate dehydratase small subunit.